The chain runs to 253 residues: 7-carboxy-7-deazaguanine synthase (253 aa).

Residues 12 to 14 (WQG) and Arg-32 contribute to the substrate site. The Radical SAM core domain maps to 23–253 (AFGRRQIFVR…FQVHKYLNVL (231 aa)). Positions 36, 40, and 43 each coordinate [4Fe-4S] cluster. Ser-45 provides a ligand contact to Mg(2+). Thr-98 lines the substrate pocket. Gly-100 is an S-adenosyl-L-methionine binding site.

It belongs to the radical SAM superfamily. 7-carboxy-7-deazaguanine synthase family. Homodimer. It depends on [4Fe-4S] cluster as a cofactor. Requires S-adenosyl-L-methionine as cofactor. Mg(2+) is required as a cofactor.

It carries out the reaction 6-carboxy-5,6,7,8-tetrahydropterin + H(+) = 7-carboxy-7-deazaguanine + NH4(+). It participates in purine metabolism; 7-cyano-7-deazaguanine biosynthesis. Functionally, catalyzes the complex heterocyclic radical-mediated conversion of 6-carboxy-5,6,7,8-tetrahydropterin (CPH4) to 7-carboxy-7-deazaguanine (CDG), a step common to the biosynthetic pathways of all 7-deazapurine-containing compounds. The polypeptide is 7-carboxy-7-deazaguanine synthase (Thermococcus kodakarensis (strain ATCC BAA-918 / JCM 12380 / KOD1) (Pyrococcus kodakaraensis (strain KOD1))).